Consider the following 184-residue polypeptide: Translation initiation factor IF-3 (184 aa).

It belongs to the IF-3 family. Monomer.

It localises to the cytoplasm. Functionally, IF-3 binds to the 30S ribosomal subunit and shifts the equilibrium between 70S ribosomes and their 50S and 30S subunits in favor of the free subunits, thus enhancing the availability of 30S subunits on which protein synthesis initiation begins. The sequence is that of Translation initiation factor IF-3 from Mycoplasma genitalium (strain ATCC 33530 / DSM 19775 / NCTC 10195 / G37) (Mycoplasmoides genitalium).